Here is a 123-residue protein sequence, read N- to C-terminus: uncharacterized protein (123 aa).

Residues 5 to 25 (GTLVILFAIILILCIMLLFYY) form a helical membrane-spanning segment.

The protein belongs to the asfivirus CP123L family.

It is found in the host membrane. Its subcellular location is the virion. This is an uncharacterized protein from Ornithodoros (relapsing fever ticks).